A 230-amino-acid chain; its full sequence is Orotidine 5'-phosphate decarboxylase (230 aa).

Substrate contacts are provided by residues Asp-11, Lys-34, 61–70 (DLKLHDIPNT), Thr-117, Arg-179, Gln-188, Gly-208, and Arg-209. Catalysis depends on Lys-63, which acts as the Proton donor.

It belongs to the OMP decarboxylase family. Type 1 subfamily. In terms of assembly, homodimer.

The catalysed reaction is orotidine 5'-phosphate + H(+) = UMP + CO2. The protein operates within pyrimidine metabolism; UMP biosynthesis via de novo pathway; UMP from orotate: step 2/2. Catalyzes the decarboxylation of orotidine 5'-monophosphate (OMP) to uridine 5'-monophosphate (UMP). In Streptococcus sanguinis (strain SK36), this protein is Orotidine 5'-phosphate decarboxylase.